Consider the following 469-residue polypeptide: UDP-N-acetylmuramate--L-alanine ligase (469 aa).

113-119 (GSHGKTT) lines the ATP pocket.

The protein belongs to the MurCDEF family.

It is found in the cytoplasm. The catalysed reaction is UDP-N-acetyl-alpha-D-muramate + L-alanine + ATP = UDP-N-acetyl-alpha-D-muramoyl-L-alanine + ADP + phosphate + H(+). Its pathway is cell wall biogenesis; peptidoglycan biosynthesis. Cell wall formation. This chain is UDP-N-acetylmuramate--L-alanine ligase, found in Sorangium cellulosum (strain So ce56) (Polyangium cellulosum (strain So ce56)).